The primary structure comprises 380 residues: MAPNLRKSHPLLKMVNNSLIDLPTPPNISAWWNFGSLLGICLITQILTGLLLAMHYTADTTLAFSSVAHTCRNVQYGWLIRNLHANGASLFFICVYLHIGRGLYYGSYLYKETWNTGIILLLTLMATAFVGYVLPWGQMSFWGATVITNLFSAIPYIGQTLVEWAWGGFSVDNPTLTRFFALHFLLPFLIAGLTLIHLTFLHESGSNNPLGIVSNCDKIPFHPYFSLKDLLGAALMLSPLAILALFTPNFLGDPENFTPANPLVTPPHIKPEWYFLFAYAILRSIPNKLGGVLALAASVLILFLSPFLHKSKQRTMTFRPLSQLLFWFLVANLLILTWVGSQPVEHPFIIIGQLASFTYFTTLLVLLPLTGALENKILNY.

4 helical membrane-spanning segments follow: residues 34 to 54 (FGSLLGICLITQILTGLLLAM), 78 to 99 (WLIRNLHANGASLFFICVYLHI), 114 to 134 (WNTGIILLLTLMATAFVGYVL), and 179 to 199 (FFALHFLLPFLIAGLTLIHLT). 2 residues coordinate heme b: His-84 and His-98. Positions 183 and 197 each coordinate heme b. His-202 is an a ubiquinone binding site. 4 consecutive transmembrane segments (helical) span residues 227–247 (LKDLLGAALMLSPLAILALFT), 289–309 (LGGVLALAASVLILFLSPFLH), 321–341 (LSQLLFWFLVANLLILTWVGS), and 348–368 (FIIIGQLASFTYFTTLLVLLP).

This sequence belongs to the cytochrome b family. In terms of assembly, the cytochrome bc1 complex contains 11 subunits: 3 respiratory subunits (MT-CYB, CYC1 and UQCRFS1), 2 core proteins (UQCRC1 and UQCRC2) and 6 low-molecular weight proteins (UQCRH/QCR6, UQCRB/QCR7, UQCRQ/QCR8, UQCR10/QCR9, UQCR11/QCR10 and a cleavage product of UQCRFS1). This cytochrome bc1 complex then forms a dimer. Heme b serves as cofactor.

It localises to the mitochondrion inner membrane. Component of the ubiquinol-cytochrome c reductase complex (complex III or cytochrome b-c1 complex) that is part of the mitochondrial respiratory chain. The b-c1 complex mediates electron transfer from ubiquinol to cytochrome c. Contributes to the generation of a proton gradient across the mitochondrial membrane that is then used for ATP synthesis. This chain is Cytochrome b (MT-CYB), found in Herpetotheres cachinnans (Laughing falcon).